The following is a 338-amino-acid chain: UDP-N-acetylglucosamine--N-acetylmuramyl-(pentapeptide) pyrophosphoryl-undecaprenol N-acetylglucosamine transferase (338 aa).

UDP-N-acetyl-alpha-D-glucosamine contacts are provided by residues 10–12 (TGG), asparagine 122, serine 177, and glutamine 275.

It belongs to the glycosyltransferase 28 family. MurG subfamily.

It localises to the cell inner membrane. The enzyme catalyses di-trans,octa-cis-undecaprenyl diphospho-N-acetyl-alpha-D-muramoyl-L-alanyl-D-glutamyl-meso-2,6-diaminopimeloyl-D-alanyl-D-alanine + UDP-N-acetyl-alpha-D-glucosamine = di-trans,octa-cis-undecaprenyl diphospho-[N-acetyl-alpha-D-glucosaminyl-(1-&gt;4)]-N-acetyl-alpha-D-muramoyl-L-alanyl-D-glutamyl-meso-2,6-diaminopimeloyl-D-alanyl-D-alanine + UDP + H(+). Its pathway is cell wall biogenesis; peptidoglycan biosynthesis. Cell wall formation. Catalyzes the transfer of a GlcNAc subunit on undecaprenyl-pyrophosphoryl-MurNAc-pentapeptide (lipid intermediate I) to form undecaprenyl-pyrophosphoryl-MurNAc-(pentapeptide)GlcNAc (lipid intermediate II). The sequence is that of UDP-N-acetylglucosamine--N-acetylmuramyl-(pentapeptide) pyrophosphoryl-undecaprenol N-acetylglucosamine transferase from Sulfurovum sp. (strain NBC37-1).